The primary structure comprises 830 residues: Scavenger receptor class F member 1 (830 aa).

The N-terminal stretch at 1-19 (MGLGLLLPLLLLWTRGTQG) is a signal peptide. Over 20–421 (SELDPKGQHV…CQPGSGSRDT (402 aa)) the chain is Extracellular. 4 EGF-like domains span residues 53-87 (TIPICEGPDACQKDEVCVKPGLCRCKPGFFGAHCS), 95-130 (WGPDCRESCPCHPHGQCEPATGACQCQADRWGARCE), 155-191 (WSSTCRRPCQCNTAAARCEQATGACVCKPGWWGRRCS), and 215-249 (WGPECQQQCECVRGRCSAASGECTCPPGFRGARCE). Cystine bridges form between Cys-57–Cys-69, Cys-63–Cys-75, Cys-77–Cys-86, Cys-99–Cys-111, Cys-105–Cys-118, Cys-120–Cys-129, Cys-159–Cys-172, Cys-165–Cys-179, Cys-181–Cys-190, Cys-219–Cys-230, Cys-225–Cys-237, and Cys-239–Cys-248. N-linked (GlcNAc...) asparagine glycosylation is present at Asn-289. EGF-like domains are found at residues 302-339 (FGESCEQQCPHCRHGEACEPDTGHCQRCDPGWLGPRCE) and 351-382 (CGSTCPTCVQGSCDTVTGDCVCSAGYWGPSCN). 6 disulfides stabilise this stretch: Cys-306–Cys-319, Cys-313–Cys-326, Cys-329–Cys-338, Cys-355–Cys-363, Cys-358–Cys-370, and Cys-372–Cys-381. Asn-382 and Asn-393 each carry an N-linked (GlcNAc...) asparagine glycan. A helical transmembrane segment spans residues 422 to 442 (ALIAGSLVPLLLLFLGLACCA). The Cytoplasmic segment spans residues 443 to 830 (CCCWAPRSDL…VVPISRPPEP (388 aa)). Disordered stretches follow at residues 516–539 (GWATDDSFSSDPESGEADEVPAYC), 581–688 (SLAR…SGPV), and 715–830 (FQKG…PPEP). A phosphoserine mark is found at Ser-589 and Ser-606. Residues 634 to 643 (ESTGPEEAEA) show a composition bias toward acidic residues. Residues 644-653 (PESFPAAASP) show a composition bias toward low complexity.

In terms of assembly, heterophilic interaction with SREC2 via its extracellular domain. The heterophilic interaction is suppressed by the presence of ligand such as Ac-LDL. Interacts with AVIL. As to expression, endothelial cells.

It localises to the membrane. Its function is as follows. Mediates the binding and degradation of acetylated low density lipoprotein (Ac-LDL). Mediates heterophilic interactions, suggesting a function as adhesion protein. Plays a role in the regulation of neurite-like outgrowth. This Homo sapiens (Human) protein is Scavenger receptor class F member 1 (SCARF1).